An 818-amino-acid polypeptide reads, in one-letter code: LisH domain-containing protein ARMC9 (818 aa).

In terms of domain architecture, LisH spans 7–39 (HESELLGLVKEYLDFAEFEDTLKTFSKECKIKG). A coiled-coil region spans residues 204 to 230 (QSNKEILQQLHQQLVEAERRSVTYLKR). S582 is modified (phosphoserine). Disordered stretches follow at residues 642 to 755 (VQWS…TTRE) and 790 to 818 (SSCG…SHRK). Positions 701-711 (STPESCVSSSS) are enriched in low complexity. Residues 792–818 (CGPQQASRPGSTASSTRGLPSSQSHRK) are compositionally biased toward polar residues.

Interacts with TOGARAM1, CCDC66, CEP104, CSPP1 and CEP290. Interacts with NDUFAF2. In terms of tissue distribution, strongly expressed in most melanomas and melanocytes. Weakly expressed in the testis.

Its subcellular location is the cytoplasm. The protein localises to the cytoskeleton. The protein resides in the cilium basal body. It is found in the cell projection. It localises to the cilium. Its subcellular location is the microtubule organizing center. The protein localises to the centrosome. The protein resides in the centriole. Its function is as follows. Involved in ciliogenesis. It is required for appropriate acetylation and polyglutamylation of ciliary microtubules, and regulation of cilium length. Acts as a positive regulator of hedgehog (Hh)signaling. May participate in the trafficking and/or retention of GLI2 and GLI3 proteins at the ciliary tip. The sequence is that of LisH domain-containing protein ARMC9 from Homo sapiens (Human).